A 398-amino-acid polypeptide reads, in one-letter code: Odorant receptor 24a (398 aa).

The Cytoplasmic portion of the chain corresponds to 1–14 (MLPRFLTASYPMER). The helical transmembrane segment at 15–31 (HYFMVPKFALSLIGFYP) threads the bilayer. Residues 32–46 (EQKRTVLVKLWSFFN) are Extracellular-facing. Residues 47–67 (FFILTYGCYAEAYYGIHYIPI) traverse the membrane as a helical segment. The Cytoplasmic portion of the chain corresponds to 68–74 (NIATALD). Residues 75–95 (ALCPVASSILSLVKMVAIWWY) form a helical membrane-spanning segment. The Extracellular segment spans residues 96–124 (QDELRSLIERVRFLTEQQKSKRKLGYKKR). Residues 125-145 (FYTLATQLTFLLLCCGFCTST) form a helical membrane-spanning segment. The Cytoplasmic segment spans residues 146–199 (SYSVRHLIDNILRRTHGKDWIYETPFKMMFPDLLLRLPLYPITYILVHWHGYIT). A helical membrane pass occupies residues 200-220 (VVCFVGADGFFLGFCLYFTVL). Residues 221 to 269 (LLCLQDDVCDLLEVENIEKSPSEAEEARIVREMEKLVDRHNEVAELTER) lie on the Extracellular side of the membrane. A helical transmembrane segment spans residues 270–290 (LSGVMVEITLAHFVTSSLIIG). Over 291-295 (TSVVD) the chain is Cytoplasmic. The chain crosses the membrane as a helical span at residues 296-316 (ILLFSGLGIIVYVVYTCAVGV). At 317 to 398 (EIFLYCLGGS…SLIALAKSVI (82 aa)) the chain is on the extracellular side.

The protein belongs to the insect chemoreceptor superfamily. Heteromeric odorant receptor channel (TC 1.A.69) family. Or1a subfamily. Interacts with Orco. Complexes exist early in the endomembrane system in olfactory sensory neurons (OSNs), coupling these complexes to the conserved ciliary trafficking pathway. In terms of tissue distribution, not expressed in either the antenna or maxillary palp.

It localises to the cell membrane. Odorant receptor which mediates acceptance or avoidance behavior, depending on its substrates. The odorant receptor repertoire encodes a large collection of odor stimuli that vary widely in identity, intensity, and duration. May form a complex with Orco to form odorant-sensing units, providing sensitive and prolonged odorant signaling and calcium permeability. Involved in the behavioral responses to pentanol, hexanol, octanol, nonanol, propyl acetate, butyl acetate, isoamyl acetate, methyl caproate, anisole, heptanal, 2-heptanone, r-carvone, and nonanoic acid. Also responds to pyrazines. This chain is Odorant receptor 24a (Or24a), found in Drosophila melanogaster (Fruit fly).